Consider the following 523-residue polypeptide: FAD:protein FMN transferase (523 aa).

3 helical membrane passes run 88-108 (LLAGAGLAYLLPALAFVVALA), 118-138 (GGAALVGGVVLMFSFLPLVLL), and 169-189 (GLALAAGLVLAGGVRVLTAPA). FAD-binding positions include 277 to 279 (LFD) and D336. Residue A339 coordinates Mg(2+). FAD is bound by residues K342 and 423–425 (HII). Mg(2+) contacts are provided by D450 and T454.

In the N-terminal section; belongs to the RseC family. This sequence in the C-terminal section; belongs to the ApbE family. The cofactor is Mg(2+).

The protein resides in the cell membrane. It catalyses the reaction L-threonyl-[protein] + FAD = FMN-L-threonyl-[protein] + AMP + H(+). In terms of biological role, flavin transferase that catalyzes the transfer of the FMN moiety of FAD and its covalent binding to the hydroxyl group of a threonine residue in a target flavoprotein. Is likely involved in the modification of RnfG and RnfD. Required for nitrogen fixation. This is FAD:protein FMN transferase from Rhodobacter capsulatus (Rhodopseudomonas capsulata).